The following is a 159-amino-acid chain: Small ribosomal subunit protein uS4 (159 aa).

The region spanning 106 to 158 (RRLQTIVYRMGLAKSIYHARQLIVHGHIAIEGRRVTSPGFLVPRELEDKITLV) is the S4 RNA-binding domain.

The protein belongs to the universal ribosomal protein uS4 family. As to quaternary structure, part of the 30S ribosomal subunit. Contacts protein S5. The interaction surface between S4 and S5 is involved in control of translational fidelity.

Functionally, one of the primary rRNA binding proteins, it binds directly to 16S rRNA where it nucleates assembly of the body of the 30S subunit. Its function is as follows. With S5 and S12 plays an important role in translational accuracy. This chain is Small ribosomal subunit protein uS4, found in Pyrobaculum arsenaticum (strain DSM 13514 / JCM 11321 / PZ6).